Here is a 366-residue protein sequence, read N- to C-terminus: Ribosomal RNA large subunit methyltransferase M (366 aa).

S-adenosyl-L-methionine is bound by residues Ser-188, 221–224 (CPGG), Asp-240, Asp-260, and Asp-277. Lys-306 serves as the catalytic Proton acceptor.

This sequence belongs to the class I-like SAM-binding methyltransferase superfamily. RNA methyltransferase RlmE family. RlmM subfamily. As to quaternary structure, monomer.

The protein resides in the cytoplasm. The catalysed reaction is cytidine(2498) in 23S rRNA + S-adenosyl-L-methionine = 2'-O-methylcytidine(2498) in 23S rRNA + S-adenosyl-L-homocysteine + H(+). Its function is as follows. Catalyzes the 2'-O-methylation at nucleotide C2498 in 23S rRNA. This chain is Ribosomal RNA large subunit methyltransferase M, found in Cronobacter sakazakii (strain ATCC BAA-894) (Enterobacter sakazakii).